Consider the following 156-residue polypeptide: Ribosomal RNA large subunit methyltransferase H (156 aa).

S-adenosyl-L-methionine contacts are provided by residues Leu73, Gly104, and 123–128; that span reads LSSLTL.

It belongs to the RNA methyltransferase RlmH family. As to quaternary structure, homodimer.

It localises to the cytoplasm. The enzyme catalyses pseudouridine(1915) in 23S rRNA + S-adenosyl-L-methionine = N(3)-methylpseudouridine(1915) in 23S rRNA + S-adenosyl-L-homocysteine + H(+). Functionally, specifically methylates the pseudouridine at position 1915 (m3Psi1915) in 23S rRNA. The polypeptide is Ribosomal RNA large subunit methyltransferase H (Neisseria meningitidis serogroup C / serotype 2a (strain ATCC 700532 / DSM 15464 / FAM18)).